The primary structure comprises 123 residues: Histone H2B.1, embryonic (123 aa).

The segment at 1-32 (MAPTGQVAKKGSKKAVKPPRASGGKKRHRKRK) is disordered. Basic residues predominate over residues 10–32 (KGSKKAVKPPRASGGKKRHRKRK). Residue serine 110 is glycosylated (O-linked (GlcNAc) serine). Lysine 118 participates in a covalent cross-link: Glycyl lysine isopeptide (Lys-Gly) (interchain with G-Cter in ubiquitin).

The protein belongs to the histone H2B family. The nucleosome is a histone octamer containing two molecules each of H2A, H2B, H3 and H4 assembled in one H3-H4 heterotetramer and two H2A-H2B heterodimers. The octamer wraps approximately 147 bp of DNA. Monoubiquitination of Lys-118 gives a specific tag for epigenetic transcriptional activation and is also prerequisite for histone H3 'Lys-4' and 'Lys-79' methylation. In terms of processing, glcNAcylation at Ser-110 promotes monoubiquitination of Lys-118. It fluctuates in response to extracellular glucose, and associates with transcribed genes.

Its subcellular location is the nucleus. It localises to the chromosome. In terms of biological role, core component of nucleosome. Nucleosomes wrap and compact DNA into chromatin, limiting DNA accessibility to the cellular machineries which require DNA as a template. Histones thereby play a central role in transcription regulation, DNA repair, DNA replication and chromosomal stability. DNA accessibility is regulated via a complex set of post-translational modifications of histones, also called histone code, and nucleosome remodeling. The sequence is that of Histone H2B.1, embryonic from Psammechinus miliaris (Green sea urchin).